The following is a 437-amino-acid chain: MCAPLFQPAIIQSVLDLDVYKINMMQAAYRFYPQTQVRYELIVRSDDNLSDLVEEVREEINRLAELRFDAAQLAYLAEKAPYLTAEFLSYLETFRFHPQQQVSVGIFRTAQGDCQLRVTINGIWHETILYETLVMSIISELRNRRYWAQIPQSQLHKVLEDKLDFLDSELKRRNITNFRFSEMGTRRRFSFAAQKTMLDVLRARVPELLLGTSNYHLAQEFNLTPIGTVAHEWTMAHQALVAIQHSQRVALDKWLEAFNGSLGIALTDTIGIDAFLSDFDLDKATAYAGVRHDSGSPFVWGDKIIAHYESLGIDPTTKTLIFTDGLDFARALDICEYFAGRAQISFGIGTFLANDMGNWTNDKGTRYQPISMVVKMAECNGSPVAKISDEPEKAMCEDIFFLMNLKQRFGLEVDLDKAIETLKQMKRQQKKRIQSVA.

A Phosphohistidine; by autocatalysis modification is found at H231.

This sequence belongs to the NAPRTase family. Transiently phosphorylated on a His residue during the reaction cycle. Phosphorylation strongly increases the affinity for substrates and increases the rate of nicotinate D-ribonucleotide production. Dephosphorylation regenerates the low-affinity form of the enzyme, leading to product release.

The enzyme catalyses nicotinate + 5-phospho-alpha-D-ribose 1-diphosphate + ATP + H2O = nicotinate beta-D-ribonucleotide + ADP + phosphate + diphosphate. The protein operates within cofactor biosynthesis; NAD(+) biosynthesis; nicotinate D-ribonucleotide from nicotinate: step 1/1. Functionally, catalyzes the synthesis of beta-nicotinate D-ribonucleotide from nicotinate and 5-phospho-D-ribose 1-phosphate at the expense of ATP. The chain is Nicotinate phosphoribosyltransferase from Vibrio vulnificus (strain CMCP6).